A 76-amino-acid polypeptide reads, in one-letter code: Beta-defensin 121 (76 aa).

An N-terminal signal peptide occupies residues 1–15; that stretch reads MKLLLLLLTVTLLLA. 3 disulfides stabilise this stretch: Cys-23–Cys-50, Cys-30–Cys-44, and Cys-34–Cys-51.

This sequence belongs to the beta-defensin family. As to expression, abundant expression in the male reproductive tract only.

It is found in the secreted. Its function is as follows. Has antibacterial activity. In Macaca mulatta (Rhesus macaque), this protein is Beta-defensin 121 (DEFB121).